The chain runs to 339 residues: Major pollen allergen Lol p 5b (339 aa).

Residues 1 to 25 form the signal peptide; sequence MAVQKHTVALFLAVALVAGPAASYA. Repeat copies occupy residues 32–34, 35–37, 38–40, 41–43, 44–46, 47–49, 50–52, 53–55, and 56–58. The tract at residues 32–58 is 9 X 3 AA tandem repeats of [PA]-A-[TA]; it reads PATPATPAAPATAATPATPATPATPAA. Residues 36–58 are compositionally biased toward low complexity; that stretch reads ATPAAPATAATPATPATPATPAA. The interval 36 to 65 is disordered; sequence ATPAAPATAATPATPATPATPAAVPSGKAT. One copy of the 2-1; truncated repeat lies at 285–290; that stretch reads ATPAAA. The segment at 285 to 334 is 6 X 9 AA approximate tandem repeats of T-A-T-A-T-P-A-A-A; sequence ATPAAAATATPTPAAATATATPAAAYATATPAAATATATPAAATATPAAA. 4 consecutive repeat copies span residues 292 to 300, 301 to 309, 310 to 318, and 319 to 327. One copy of the 2-6; truncated repeat lies at 328–334; sequence TATPAAA.

Belongs to the Poa p IX/Phl p VI allergen family. In terms of tissue distribution, pollen, starch granules.

The chain is Major pollen allergen Lol p 5b from Lolium perenne (Perennial ryegrass).